The sequence spans 156 residues: Small ribosomal subunit protein uS7 (156 aa).

The protein belongs to the universal ribosomal protein uS7 family. In terms of assembly, part of the 30S ribosomal subunit. Contacts proteins S9 and S11.

In terms of biological role, one of the primary rRNA binding proteins, it binds directly to 16S rRNA where it nucleates assembly of the head domain of the 30S subunit. Is located at the subunit interface close to the decoding center, probably blocks exit of the E-site tRNA. This is Small ribosomal subunit protein uS7 (rpsG) from Geobacillus stearothermophilus (Bacillus stearothermophilus).